The following is a 757-amino-acid chain: MTAGSVCAPQIIPLRVPQPGKANHEIDTNTLLEMKSDTPDVNIYYTLDGSKPDFLKKVGSGENNTFKYIKPIALPDGKIQVKAVAVSKDCRQSGIVTKVFQVDYEPPKMVSSEDHGEDALKGFSKQELKNGFVGPKLRKKYKNAENKSTWNVNLRRLADLKVGERADPKTLKDLRFSESPLEIPAYHEGASARLPTHQAQSPGFAHITGQKSLTSTEVMRIQRETDFLKCAHCLASRPSDPFARFCQECGAPVPPIFGYRLPPPEGAQMGLCAECGSMVPMNTPICVVCEAPLAPQLRPQASLYLKERVICRTCGTGNPAHLRYCVTCEGTLPPTQEQWLCNGDEVPRLPTRNGETISCSRCGCQNLWEASFCDWCGAMLGISASHSVCPKCGASNHLTARFCGSCGIYVKSITRFRMNNSLAIVAGGPRPFPEPRSAWQSLNVPLPTPATGSKKDMGTQTSGLFYPSGKLLAKKELEAASHRQRQEKMSDHRPVLTAVSPGRGYWRKQLDHISAHLRSYAQNNPEFRALIAEPRMGKLISATVHEDGYEVSIRLNYIQVSNKNLYLNKSMNLSDHFLSSVTEGGNGLYGSRSSLVSAYSQSISDTPESIKKMKNPKAKSFLANPEPLTPENRLLLEEVGSTGKGRLSVLEQLLDEGADPNCCDSQGRPAVIVAVVNKHFEAIPVLAQRGADIDQQWGPFGNTALHEATLLGLEGRESVATLLGCNANTQKKNTRGQTAYDIALEMGDDLTSALFAD.

2 DZANK-type zinc fingers span residues 230–290 (CAHC…VVCE) and 359–407 (CSRC…GSCG). 2 ANK repeats span residues 631 to 662 (ENRL…DPNC) and 666 to 695 (QGRP…DIDQ).

In terms of assembly, interacts with NINL. Associates with DYNC1H1 and multiple dynein intermediate and light chains as well as actin-binding proteins. Expressed in retina.

Its subcellular location is the cell projection. It localises to the cilium. Involved in vesicle transport in photoreceptor cells. The protein is Double zinc ribbon and ankyrin repeat-containing protein 1 of Rattus norvegicus (Rat).